Here is a 197-residue protein sequence, read N- to C-terminus: dITP/XTP pyrophosphatase (197 aa).

Residue 8-13 (TGNAGK) participates in substrate binding. Mg(2+)-binding residues include Glu40 and Asp69. Asp69 serves as the catalytic Proton acceptor. Substrate is bound by residues Ser70, 154–157 (FGYD), Lys177, and 182–183 (HR).

This sequence belongs to the HAM1 NTPase family. In terms of assembly, homodimer. Mg(2+) is required as a cofactor.

The catalysed reaction is XTP + H2O = XMP + diphosphate + H(+). The enzyme catalyses dITP + H2O = dIMP + diphosphate + H(+). It catalyses the reaction ITP + H2O = IMP + diphosphate + H(+). Its function is as follows. Pyrophosphatase that catalyzes the hydrolysis of nucleoside triphosphates to their monophosphate derivatives, with a high preference for the non-canonical purine nucleotides XTP (xanthosine triphosphate), dITP (deoxyinosine triphosphate) and ITP. Seems to function as a house-cleaning enzyme that removes non-canonical purine nucleotides from the nucleotide pool, thus preventing their incorporation into DNA/RNA and avoiding chromosomal lesions. The sequence is that of dITP/XTP pyrophosphatase (rdgB) from Shigella flexneri.